Consider the following 671-residue polypeptide: DNA polymerase kappa (671 aa).

The UmuC domain maps to 105–285 (WLHVDMDAFY…LPVRKIGGIG (181 aa)). Mg(2+) contacts are provided by D109 and D200. Residue E201 is part of the active site. Residues 576 to 613 (YWIDGYKCVLCGIELPPSFVEERQEHSDFHLAQRLQNE) form a UBZ3-type zinc finger. Positions 583, 586, 601, and 605 each coordinate Zn(2+). The segment at 607–671 (AQRLQNEETG…NQNSNETQRK (65 aa)) is disordered. The Nuclear localization signal signature appears at 625 to 632 (KRRILGKE). Positions 629-650 (LGKEKVNSKPKKQKPDQKDSSK) are enriched in basic and acidic residues. Polar residues predominate over residues 659-671 (TKSNQNSNETQRK).

The protein belongs to the DNA polymerase type-Y family. Mg(2+) serves as cofactor. As to expression, expressed in roots, leaves, stems, flowers and siliques. Present in endoreduplicating cells.

Its subcellular location is the nucleus. The enzyme catalyses DNA(n) + a 2'-deoxyribonucleoside 5'-triphosphate = DNA(n+1) + diphosphate. Its activity is regulated as follows. Unable to bypass a single 1,N(6)-ethenoadenine (epsilon-dA) or an abasic site lesions in DNA templates. Template-directed low-fidelity DNA polymerase specifically involved in DNA repair. Able to extend primer-terminal mispairs, and to insert nucleotides opposite to a single 7,8-dihydro-8-oxoGuanine (8-oxoG) lesion and moderately extend from the resulting primer end, thus leading to both error-free and error-prone bypass of 8-oxoG DNA lesions. Probably involved in consecutive DNA replication cycles in the absence of mitosis. Binds preferentially template-primer DNA substrates or single-stranded DNA. Plays an important role in translesion synthesis, where the normal high-fidelity DNA polymerases cannot proceed and DNA synthesis stalls. Depending on the context, it inserts the correct base, but causes frequent base transitions, transversions and frameshifts. This chain is DNA polymerase kappa, found in Arabidopsis thaliana (Mouse-ear cress).